A 547-amino-acid chain; its full sequence is Glutamyl-tRNA(Gln) amidotransferase subunit B, mitochondrial (547 aa).

The protein belongs to the GatB/GatE family. GatB subfamily. As to quaternary structure, subunit of the heterotrimeric GatFAB amidotransferase (AdT) complex, composed of A, B and F subunits.

It is found in the mitochondrion. The catalysed reaction is L-glutamyl-tRNA(Gln) + L-glutamine + ATP + H2O = L-glutaminyl-tRNA(Gln) + L-glutamate + ADP + phosphate + H(+). Its function is as follows. Allows the formation of correctly charged Gln-tRNA(Gln) through the transamidation of misacylated Glu-tRNA(Gln) in the mitochondria. The reaction takes place in the presence of glutamine and ATP through an activated gamma-phospho-Glu-tRNA(Gln). The protein is Glutamyl-tRNA(Gln) amidotransferase subunit B, mitochondrial of Lachancea thermotolerans (strain ATCC 56472 / CBS 6340 / NRRL Y-8284) (Yeast).